The following is a 136-amino-acid chain: Psoriasis susceptibility 1 candidate gene 2 protein homolog (136 aa).

The N-terminal stretch at 1 to 22 (MILNWKLLGILVLCLHTRGISG) is a signal peptide. A disordered region spans residues 20 to 136 (ISGSEDHPSH…DLDPPREEYR (117 aa)). Basic and acidic residues predominate over residues 23-33 (SEDHPSHPPAE). Composition is skewed to pro residues over residues 44–74 (PQGP…PPWR) and 83–116 (PPEP…PPAP). Residues 117–136 (EVDHRPQEEPDLDPPREEYR) show a composition bias toward basic and acidic residues.

It is found in the secreted. This chain is Psoriasis susceptibility 1 candidate gene 2 protein homolog (PSORS1C2), found in Pan troglodytes (Chimpanzee).